A 444-amino-acid polypeptide reads, in one-letter code: ATP-dependent protease ATPase subunit HslU (444 aa).

Residues I18 and 60 to 65 (GVGKTE) each bind ATP. Residues 141-161 (DAWGNNEEGDNDSGTRQSFRK) are disordered. ATP is bound by residues D257, E322, and R394.

This sequence belongs to the ClpX chaperone family. HslU subfamily. A double ring-shaped homohexamer of HslV is capped on each side by a ring-shaped HslU homohexamer. The assembly of the HslU/HslV complex is dependent on binding of ATP.

The protein resides in the cytoplasm. In terms of biological role, ATPase subunit of a proteasome-like degradation complex; this subunit has chaperone activity. The binding of ATP and its subsequent hydrolysis by HslU are essential for unfolding of protein substrates subsequently hydrolyzed by HslV. HslU recognizes the N-terminal part of its protein substrates and unfolds these before they are guided to HslV for hydrolysis. In Aliivibrio fischeri (strain MJ11) (Vibrio fischeri), this protein is ATP-dependent protease ATPase subunit HslU.